We begin with the raw amino-acid sequence, 329 residues long: Malate dehydrogenase (329 aa).

Position 12–18 (12–18) interacts with NAD(+); the sequence is GAAGQIG. The substrate site is built by arginine 93 and arginine 99. Residues asparagine 106, glutamine 113, and 130 to 132 each bind NAD(+); that span reads TGN. Substrate is bound by residues asparagine 132 and arginine 163. Histidine 188 serves as the catalytic Proton acceptor.

Belongs to the LDH/MDH superfamily. MDH type 2 family.

It carries out the reaction (S)-malate + NAD(+) = oxaloacetate + NADH + H(+). Catalyzes the reversible oxidation of malate to oxaloacetate. This Mycobacterium leprae (strain TN) protein is Malate dehydrogenase.